The chain runs to 367 residues: Phosphoribosylaminoimidazole-succinocarboxamide synthase (367 aa).

The protein belongs to the SAICAR synthetase family.

The enzyme catalyses 5-amino-1-(5-phospho-D-ribosyl)imidazole-4-carboxylate + L-aspartate + ATP = (2S)-2-[5-amino-1-(5-phospho-beta-D-ribosyl)imidazole-4-carboxamido]succinate + ADP + phosphate + 2 H(+). It participates in purine metabolism; IMP biosynthesis via de novo pathway; 5-amino-1-(5-phospho-D-ribosyl)imidazole-4-carboxamide from 5-amino-1-(5-phospho-D-ribosyl)imidazole-4-carboxylate: step 1/2. The chain is Phosphoribosylaminoimidazole-succinocarboxamide synthase from Colwellia psychrerythraea (strain 34H / ATCC BAA-681) (Vibrio psychroerythus).